A 196-amino-acid chain; its full sequence is Proteasome subunit beta 1 (196 aa).

A propeptide spans Met-1–Ala-6 (removed in mature form; by autocatalysis). Residue Thr-7 is the Nucleophile of the active site.

The protein belongs to the peptidase T1B family. The 20S proteasome core is composed of 14 alpha and 14 beta subunits that assemble into four stacked heptameric rings, resulting in a barrel-shaped structure. The two inner rings, each composed of seven catalytic beta subunits, are sandwiched by two outer rings, each composed of seven alpha subunits. The catalytic chamber with the active sites is on the inside of the barrel. Has a gated structure, the ends of the cylinder being occluded by the N-termini of the alpha-subunits. Is capped at one or both ends by the proteasome regulatory ATPase, PAN.

It is found in the cytoplasm. It carries out the reaction Cleavage of peptide bonds with very broad specificity.. With respect to regulation, the formation of the proteasomal ATPase PAN-20S proteasome complex, via the docking of the C-termini of PAN into the intersubunit pockets in the alpha-rings, triggers opening of the gate for substrate entry. Interconversion between the open-gate and close-gate conformations leads to a dynamic regulation of the 20S proteasome proteolysis activity. Its function is as follows. Component of the proteasome core, a large protease complex with broad specificity involved in protein degradation. This chain is Proteasome subunit beta 1, found in Saccharolobus solfataricus (strain ATCC 35092 / DSM 1617 / JCM 11322 / P2) (Sulfolobus solfataricus).